The following is a 136-amino-acid chain: Ribonuclease VapC1 (136 aa).

The PINc domain maps to 18 to 129; it reads ILVDTSVLID…KKHFERLKEF (112 aa). Aspartate 21 and aspartate 101 together coordinate Mg(2+).

Belongs to the PINc/VapC protein family. The cofactor is Mg(2+).

Toxic component of a type II toxin-antitoxin (TA) system. An RNase. Its cognate antitoxin is VapB1. This is Ribonuclease VapC1 from Methanocaldococcus jannaschii (strain ATCC 43067 / DSM 2661 / JAL-1 / JCM 10045 / NBRC 100440) (Methanococcus jannaschii).